Reading from the N-terminus, the 472-residue chain is WASH complex subunit 1 (472 aa).

The interval Met1–Arg51 is required for WASH complex assembly. Disordered regions lie at residues Asp294–Leu411 and Lys429–Ser472. Positions Leu301 to Ile334 are enriched in pro residues. Positions Gln352–Ser472 are VCA. Residues Gly364–Val386 enclose the WH2 domain. Over residues Asn385–Glu400 the composition is skewed to basic and acidic residues.

The protein belongs to the WASH1 family. In terms of assembly, component of the WASH complex.

The protein localises to the early endosome membrane. Its subcellular location is the recycling endosome membrane. Its function is as follows. Acts as a nucleation-promoting factor at the surface of endosomes, where it recruits and activates the Arp2/3 complex to induce actin polymerization, playing a key role in the fission of tubules that serve as transport intermediates during endosome sorting. The sequence is that of WASH complex subunit 1 from Xenopus laevis (African clawed frog).